A 349-amino-acid chain; its full sequence is Methylthioribose-1-phosphate isomerase (349 aa).

Substrate is bound by residues arginine 49–alanine 51, arginine 92, and glutamine 199. Aspartate 240 functions as the Proton donor in the catalytic mechanism. A substrate-binding site is contributed by asparagine 250 to lysine 251.

This sequence belongs to the eIF-2B alpha/beta/delta subunits family. MtnA subfamily.

The enzyme catalyses 5-(methylsulfanyl)-alpha-D-ribose 1-phosphate = 5-(methylsulfanyl)-D-ribulose 1-phosphate. The protein operates within amino-acid biosynthesis; L-methionine biosynthesis via salvage pathway; L-methionine from S-methyl-5-thio-alpha-D-ribose 1-phosphate: step 1/6. Catalyzes the interconversion of methylthioribose-1-phosphate (MTR-1-P) into methylthioribulose-1-phosphate (MTRu-1-P). The protein is Methylthioribose-1-phosphate isomerase of Syntrophobacter fumaroxidans (strain DSM 10017 / MPOB).